Here is a 406-residue protein sequence, read N- to C-terminus: uncharacterized protein (406 aa).

The N-myristoyl glycine; by host moiety is linked to residue Gly2. Residues 291-406 (QLESTTEVKP…FQYNKPTYDI (116 aa)) form a disordered region. Residues 296 to 310 (TEVKPESTTEVKPES) are compositionally biased toward basic and acidic residues. The span at 311–323 (TSEVQPESTTEFQ) shows a compositional bias: polar residues. 3 stretches are compositionally biased toward low complexity: residues 324–333 (PESTTVVEPE), 341–351 (ESTTEFQPEST), and 359–369 (TTEPQVESTTE). The span at 370-406 (FQPESSTEPQVESTVEVQAESMNESSYFQYNKPTYDI) shows a compositional bias: polar residues.

This is an uncharacterized protein from Acanthamoeba polyphaga (Amoeba).